A 258-amino-acid polypeptide reads, in one-letter code: MNTPLRVGIVGCGVLANAMAGHLARQPRPVEIVGCLVRDPGRARGALPCHGSWEALLAQRPEVVVECAGQAALAQYAQVILAAGVDLVPASVGALADDALRGALLEAAAAAGARIRIPSGAMVGIDGLAAARHVGVAEVLYRGTMPPVALQRYVSGPLPERGLAFAGSAREAVARFPKNANLTGTIALAGIGFDRTRVEMLIDPDATANVHELLARGEFGDFHARVSGLRISESSPSSRIVAGSLAQAALGSGFLALS.

2 residues coordinate NAD(+): Ala121 and Asn181. The active site involves His211.

Belongs to the L-aspartate dehydrogenase family.

It carries out the reaction L-aspartate + NADP(+) + H2O = oxaloacetate + NH4(+) + NADPH + H(+). It catalyses the reaction L-aspartate + NAD(+) + H2O = oxaloacetate + NH4(+) + NADH + H(+). It functions in the pathway cofactor biosynthesis; NAD(+) biosynthesis; iminoaspartate from L-aspartate (dehydrogenase route): step 1/1. Specifically catalyzes the NAD or NADP-dependent dehydrogenation of L-aspartate to iminoaspartate. This chain is L-aspartate dehydrogenase 1, found in Bordetella bronchiseptica (strain ATCC BAA-588 / NCTC 13252 / RB50) (Alcaligenes bronchisepticus).